Reading from the N-terminus, the 824-residue chain is Ras guanine nucleotide exchange factor I (824 aa).

Disordered stretches follow at residues 1–51 (MSNP…KPTK) and 65–167 (GSNL…LILD). Residues 8 to 41 (SNSTNGSSNSLNGESVSPNRLGSSPGSPISKASS) show a composition bias toward low complexity. Positions 83–95 (NSSVGLLNNSTGS) are enriched in polar residues. Over residues 104-116 (SSPKSSYILSSSI) the composition is skewed to low complexity. Positions 117 to 128 (GSGGSGGGGGSS) are enriched in gly residues. The span at 136 to 167 (SASNNSSGPRSRSGSLGKNNSSQQNNNNLILD) shows a compositional bias: low complexity. The LisH domain maps to 223-255 (GRDNILQLILQHLQFEGLMDSRKILEEEAKIQY). 2 disordered regions span residues 330–354 (YVDE…TTAT) and 398–425 (NTQQ…STGT). Positions 331–341 (VDEKDNDKPSK) are enriched in basic and acidic residues. Residues 343–354 (SPTTATTTTTAT) show a composition bias toward low complexity. The span at 413–425 (LKSTQSITGSTGT) shows a compositional bias: polar residues. Residues 426–551 (LGPQVKAASL…VISDALNSGL (126 aa)) form the N-terminal Ras-GEF domain. The 232-residue stretch at 585 to 816 (DEEEISRQLT…YTRSMSFEPR (232 aa)) folds into the Ras-GEF domain.

In terms of biological role, promotes the exchange of Ras-bound GDP by GTP. This chain is Ras guanine nucleotide exchange factor I (gefI), found in Dictyostelium discoideum (Social amoeba).